A 97-amino-acid polypeptide reads, in one-letter code: Large ribosomal subunit protein uL23 (97 aa).

This sequence belongs to the universal ribosomal protein uL23 family. In terms of assembly, part of the 50S ribosomal subunit. Contacts protein L29, and trigger factor when it is bound to the ribosome.

In terms of biological role, one of the early assembly proteins it binds 23S rRNA. One of the proteins that surrounds the polypeptide exit tunnel on the outside of the ribosome. Forms the main docking site for trigger factor binding to the ribosome. The chain is Large ribosomal subunit protein uL23 from Anaeromyxobacter dehalogenans (strain 2CP-C).